Reading from the N-terminus, the 106-residue chain is Iron-sulfur cluster assembly protein CyaY (106 aa).

It belongs to the frataxin family.

In terms of biological role, involved in iron-sulfur (Fe-S) cluster assembly. May act as a regulator of Fe-S biogenesis. In Escherichia coli O127:H6 (strain E2348/69 / EPEC), this protein is Iron-sulfur cluster assembly protein CyaY.